The sequence spans 502 residues: Glycerol kinase (502 aa).

Position 13 (T13) interacts with ADP. The ATP site is built by T13, T14, and S15. Residue T13 participates in sn-glycerol 3-phosphate binding. R17 is an ADP binding site. Residues R83, E84, Y135, and D245 each coordinate sn-glycerol 3-phosphate. 5 residues coordinate glycerol: R83, E84, Y135, D245, and Q246. ADP-binding residues include T267 and G310. Positions 267, 310, 314, and 411 each coordinate ATP. 2 residues coordinate ADP: G411 and N415.

It belongs to the FGGY kinase family. As to quaternary structure, homotetramer and homodimer (in equilibrium).

It catalyses the reaction glycerol + ATP = sn-glycerol 3-phosphate + ADP + H(+). The protein operates within polyol metabolism; glycerol degradation via glycerol kinase pathway; sn-glycerol 3-phosphate from glycerol: step 1/1. With respect to regulation, activated by phosphorylation and inhibited by fructose 1,6-bisphosphate (FBP). Its function is as follows. Key enzyme in the regulation of glycerol uptake and metabolism. Catalyzes the phosphorylation of glycerol to yield sn-glycerol 3-phosphate. This Lactobacillus delbrueckii subsp. bulgaricus (strain ATCC BAA-365 / Lb-18) protein is Glycerol kinase.